The sequence spans 429 residues: Histidine--tRNA ligase (429 aa).

It belongs to the class-II aminoacyl-tRNA synthetase family. As to quaternary structure, homodimer.

The protein resides in the cytoplasm. The catalysed reaction is tRNA(His) + L-histidine + ATP = L-histidyl-tRNA(His) + AMP + diphosphate + H(+). The sequence is that of Histidine--tRNA ligase from Streptococcus pneumoniae (strain 70585).